The chain runs to 402 residues: Galactoside 2-alpha-L-fucosyltransferase (402 aa).

Over 1-6 (MRYNSN) the chain is Cytoplasmic. The chain crosses the membrane as a helical; Signal-anchor for type II membrane protein span at residues 7–27 (YLMYFCLVLGIFANIYVIIKI). Residues 28–402 (TLGSSHILEY…TDLNGKISKY (375 aa)) lie on the Lumenal side of the membrane. N-linked (GlcNAc...) asparagine glycans are attached at residues Asn-119, Asn-175, and Asn-301.

It belongs to the glycosyltransferase 11 family. May form oligomers. Post-translationally, N-glycosylated. Expression is restricted to pharyngeal neurons and gland cells.

It is found in the golgi apparatus. Its subcellular location is the golgi stack membrane. It participates in protein modification; protein glycosylation. In terms of biological role, selectively catalyzes the addition of fucose in alpha 1-2 linkage to Gal-beta-(1-&gt;3)-GalNAc-alpha-R, Gal-beta-(1-&gt;3)-(GlcNAc-beta-(1-&gt;6))-GalNAc-alpha-R and Gal-beta-(1-&gt;3)-GalNAc acceptors but not Gal-beta-(1-&gt;3)-GlcNAc-beta-(1-&gt;3)-Gal-beta-(1-&gt;4)-Glc in vitro. The chain is Galactoside 2-alpha-L-fucosyltransferase from Caenorhabditis elegans.